A 500-amino-acid chain; its full sequence is Glycerol kinase (500 aa).

Threonine 12 provides a ligand contact to ADP. Residues threonine 12, threonine 13, and serine 14 each coordinate ATP. A sn-glycerol 3-phosphate-binding site is contributed by threonine 12. An ADP-binding site is contributed by arginine 16. Positions 82, 83, 134, and 246 each coordinate sn-glycerol 3-phosphate. 5 residues coordinate glycerol: arginine 82, glutamate 83, tyrosine 134, aspartate 246, and glutamine 247. ADP contacts are provided by threonine 268 and glycine 312. Residues threonine 268, glycine 312, glutamine 316, and glycine 413 each contribute to the ATP site. The ADP site is built by glycine 413 and asparagine 417.

Belongs to the FGGY kinase family.

It carries out the reaction glycerol + ATP = sn-glycerol 3-phosphate + ADP + H(+). Its pathway is polyol metabolism; glycerol degradation via glycerol kinase pathway; sn-glycerol 3-phosphate from glycerol: step 1/1. With respect to regulation, inhibited by fructose 1,6-bisphosphate (FBP). Its function is as follows. Key enzyme in the regulation of glycerol uptake and metabolism. Catalyzes the phosphorylation of glycerol to yield sn-glycerol 3-phosphate. The polypeptide is Glycerol kinase (Saccharopolyspora erythraea (strain ATCC 11635 / DSM 40517 / JCM 4748 / NBRC 13426 / NCIMB 8594 / NRRL 2338)).